Reading from the N-terminus, the 557-residue chain is Potassium-transporting ATPase potassium-binding subunit (557 aa).

Transmembrane regions (helical) follow at residues 5 to 25 (GFLL…PLGS), 63 to 83 (LCAI…MLLG), 132 to 152 (GLTV…FALI), 170 to 190 (LLRI…LFFI), 253 to 273 (FVQM…FGEV), 283 to 303 (LLWA…WAEV), 329 to 349 (VLVS…AVIA), 356 to 376 (ALGG…FGGV), 379 to 399 (GLYG…LMIG), 416 to 436 (LTAL…ALAM), 484 to 504 (LLAF…MAIA), and 526 to 546 (LFVG…FIPA).

The protein belongs to the KdpA family. As to quaternary structure, the system is composed of three essential subunits: KdpA, KdpB and KdpC.

The protein localises to the cell inner membrane. Its function is as follows. Part of the high-affinity ATP-driven potassium transport (or Kdp) system, which catalyzes the hydrolysis of ATP coupled with the electrogenic transport of potassium into the cytoplasm. This subunit binds the periplasmic potassium ions and delivers the ions to the membrane domain of KdpB through an intramembrane tunnel. The sequence is that of Potassium-transporting ATPase potassium-binding subunit from Escherichia coli O9:H4 (strain HS).